The chain runs to 260 residues: MAYENIILEKEEKLAVLYINRPKAMNALNKDTLLEIKDAVTAVNDDPAVELLIITGSGDKSFVAGADIAFMQNLSAMEAREFGALGQKVFRLIEAMEKPVIAAVNGFALGGGCELAMCCDFRIAASNAKFGQPEVGLGITPGFGGTQRLPRLVGPGMAKQLLYTADVINADEAFRIGLVNKVVQPEELLPEVKKIAGRILSKGQLAVRLSKAAANEGMQTDIDRAMSIEADAFGLCFATQDQKEGMTAFLEKRKANFISK.

Glu114 serves as the catalytic Nucleophile. Glu134 functions as the Proton acceptor in the catalytic mechanism.

Belongs to the enoyl-CoA hydratase/isomerase family. Homotetramer.

Its subcellular location is the cytoplasm. It carries out the reaction 3-hydroxybutanoyl-CoA = (2E)-butenoyl-CoA + H2O. The catalysed reaction is a short-chain (3S)-3-hydroxyacyl-CoA = a short-chain (2E)-enoyl-CoA + H2O. It functions in the pathway lipid metabolism; butanoate metabolism. In terms of biological role, involved in syntrophic growth of S.wolfei with butyrate, as part of the butyrate oxidation pathway. Probably catalyzes the hydration of crotonyl-CoA to 3-hydroxybutyryl-CoA. The polypeptide is Crotonyl-CoA hydratase (Syntrophomonas wolfei subsp. wolfei (strain DSM 2245B / Goettingen)).